The following is a 119-amino-acid chain: Probable non-functional T cell receptor gamma variable 10 (119 aa).

Residues 1-19 form the signal peptide; it reads MSLLEAFAFSSWALGLGLS. The 96-residue stretch at 24-119 folds into the Ig-like domain; that stretch reads FQLSISTEVK…MAVYYCAAWD (96 aa). An intrachain disulfide couples cysteine 40 to cysteine 115.

Gamma-delta TR is a heterodimer composed of a gamma and delta chain; disulfide-linked. The gamma-delta TR is associated with the transmembrane signaling CD3 coreceptor proteins following the stoichiometry: a single gamma-delta TR heterodimer associates with one CD3D-CD3E heterodimer, one CD3G-CD3E heterodimer and one CD247 homodimer forming a stable octameric structure. Upon activation, gamma-delta TR complex associates with FCER1G to initiate intracellular signaling.

It is found in the cell membrane. In terms of biological role, probable non-functional open reading frame (ORF) of V region of the variable domain of T cell receptor (TR) gamma chain. Non-functional ORF generally cannot participate in the synthesis of a productive T cell receptor (TR) chain due to altered V-(D)-J or switch recombination and/or splicing site (at mRNA level) and/or conserved amino acid change (protein level). Gamma-delta TRs recognize a variety of self and foreign non-peptide antigens frequently expressed at the epithelial boundaries between the host and external environment, including endogenous lipids presented by MH-like protein CD1D and phosphoantigens presented by butyrophilin-like molecule BTN3A1. Upon antigen recognition induces rapid, innate-like immune responses involved in pathogen clearance and tissue repair. Binding of gamma-delta TR complex to antigen triggers phosphorylation of immunoreceptor tyrosine-based activation motifs (ITAMs) in the CD3 chains by the LCK and FYN kinases, allowing the recruitment, phosphorylation, and activation of ZAP70 that facilitates phosphorylation of the scaffolding proteins LCP2 and LAT. This lead to the formation of a supramolecular signalosome that recruits the phospholipase PLCG1, resulting in calcium mobilization and ERK activation, ultimately leading to T cell expansion and differentiation into effector cells. Gamma-delta TRs are produced through somatic rearrangement of a limited repertoire of variable (V), diversity (D), and joining (J) genes. The potential diversity of gamma-delta TRs is conferred by the unique ability to rearrange (D) genes in tandem and to utilize all three reading frames. The combinatorial diversity is considerably increased by the sequence exonuclease trimming and random nucleotide (N) region additions which occur during the V-(D)-J rearrangements. The polypeptide is Probable non-functional T cell receptor gamma variable 10 (Homo sapiens (Human)).